Consider the following 378-residue polypeptide: Chitinase (378 aa).

An N-terminal signal peptide occupies residues 1 to 28; that stretch reads MNFTVKYSFLVICLLCCLLSTYVSVIEG. The region spanning 53–378 is the GH18 domain; that stretch reads GIIQGYYPSW…AIEYFVESLH (326 aa). E174 functions as the Proton donor in the catalytic mechanism. A disulfide bridge connects residues C220 and C230.

This sequence belongs to the glycosyl hydrolase 18 family. In terms of assembly, forms a hetero-multimeric, high molecular weight complex composed of at least CHT1, SOAP AND WARP. Within the complex, may interact with WARP via a disulfide bond.

It localises to the secreted. It is found in the cytoplasmic vesicle. Its subcellular location is the secretory vesicle. The protein resides in the microneme. The enzyme catalyses Random endo-hydrolysis of N-acetyl-beta-D-glucosaminide (1-&gt;4)-beta-linkages in chitin and chitodextrins.. Inhibited by allosamidin. Its function is as follows. Endochitinase that cleaves beta-1,4-linkages between tri- and tetramers of N-acetylglucosamine (GlcNAc) from penta- and hexameric chitin oligomers. Does not cleave smaller chitin oligosaccharides. Required to cross the acellular, chitin-containing peritrophic matrix (PM) which is formed around the ingested blood meal in the mosquito midgut allowing the ookinete to invade the mosquito gut epithelium. This is Chitinase from Plasmodium falciparum (isolate 3D7).